Consider the following 140-residue polypeptide: Large ribosomal subunit protein bL17 (140 aa).

Residues 120–140 (EDAKGQDSGPVMVDEDDFAEA) are disordered.

Belongs to the bacterial ribosomal protein bL17 family. Part of the 50S ribosomal subunit. Contacts protein L32.

The chain is Large ribosomal subunit protein bL17 from Erythrobacter litoralis (strain HTCC2594).